Reading from the N-terminus, the 154-residue chain is Deoxyuridine 5'-triphosphate nucleotidohydrolase (154 aa).

Substrate is bound by residues 64–66 (RSG), asparagine 77, 81–83 (TID), and lysine 91.

This sequence belongs to the dUTPase family. Homotrimer. It depends on Mg(2+) as a cofactor.

The enzyme catalyses dUTP + H2O = dUMP + diphosphate + H(+). The protein operates within pyrimidine metabolism; dUMP biosynthesis; dUMP from dCTP (dUTP route): step 2/2. This enzyme is involved in nucleotide metabolism: it produces dUMP, the immediate precursor of thymidine nucleotides and it decreases the intracellular concentration of dUTP so that uracil cannot be incorporated into DNA. This is Deoxyuridine 5'-triphosphate nucleotidohydrolase from Mycobacterium sp. (strain JLS).